The chain runs to 355 residues: Putative cyclin-A3-1 (355 aa).

Belongs to the cyclin family. Cyclin AB subfamily.

The protein is Putative cyclin-A3-1 (CYCA3-1) of Arabidopsis thaliana (Mouse-ear cress).